The primary structure comprises 492 residues: Aerolysin-4 (492 aa).

Positions 1 to 23 (MKKLKITGLSLIISGLLMAQAQA) are cleaved as a signal peptide. 2 disulfide bridges follow: Cys-42–Cys-98 and Cys-182–Cys-187. The segment at 68 to 84 (WQISGLANGWVIMGPGY) is interaction with host N-linked glycan. The tract at residues 256-288 (YGLSEKVTTKNKFKWPLVGETELSIEIAANQSW) is part of the transmembrane beta-barrel after proteolytic activation of the toxin and insertion into the host membrane. The tract at residues 346–355 (RWGGNAWYTH) is interaction with glycans from host GPI-anchor. Positions 446 to 492 (AAASHSSRARNLSAGQGLRLEIPLDAQELSGLGFNNVSLSVTPAANQ) are excised as a propeptide.

This sequence belongs to the aerolysin family. In terms of assembly, homodimer in solution; homoheptamer in the host membrane. After binding to GPI-anchored proteins in target membranes and proteolytic removal of the C-terminal propeptide, the protein assembles into a heptameric pre-pore complex. A further conformation change leads to insertion into the host membrane. Proteolytic cleavage and subsequent release of the propeptide trigger a major conformation change, leading to the formation of a heptameric pre-pore that then inserts into the host membrane.

Its subcellular location is the secreted. The protein localises to the host cell membrane. Its function is as follows. Secreted, cytolytic toxin that forms pores in host membranes after proteolytic removal of a C-terminal propeptide, leading to destruction of the membrane permeability barrier and cell death. The pores are formed by transmembrane beta-strands and are approximately 3 nm in diameter. The protein is Aerolysin-4 (ahh4) of Aeromonas hydrophila.